The primary structure comprises 391 residues: Multidrug resistance protein MdtL (391 aa).

A run of 12 helical transmembrane segments spans residues 4–24 (FLIC…MYLV), 42–62 (IAFS…GKVA), 69–89 (PVAI…SLAE), 93–113 (LFLA…VVAF), 131–151 (LLNG…HLIM), 158–178 (SLFW…LFIL), 203–222 (FFLS…LTFV), 245–265 (ALTA…LGIF), 269–289 (TLMI…AVSP), 293–313 (VSLF…GVAM), 331–351 (LGIA…VVGI), and 356–376 (MLIG…MFVA).

Belongs to the major facilitator superfamily. DHA1 family. MdtL (TC 2.A.1.2.22) subfamily.

Its subcellular location is the cell inner membrane. Confers resistance to chloramphenicol. This chain is Multidrug resistance protein MdtL, found in Escherichia coli (strain SMS-3-5 / SECEC).